We begin with the raw amino-acid sequence, 89 residues long: Small ribosomal subunit protein uS15 (89 aa).

It belongs to the universal ribosomal protein uS15 family. Part of the 30S ribosomal subunit. Forms a bridge to the 50S subunit in the 70S ribosome, contacting the 23S rRNA.

Functionally, one of the primary rRNA binding proteins, it binds directly to 16S rRNA where it helps nucleate assembly of the platform of the 30S subunit by binding and bridging several RNA helices of the 16S rRNA. Its function is as follows. Forms an intersubunit bridge (bridge B4) with the 23S rRNA of the 50S subunit in the ribosome. In Latilactobacillus sakei subsp. sakei (strain 23K) (Lactobacillus sakei subsp. sakei), this protein is Small ribosomal subunit protein uS15.